Reading from the N-terminus, the 67-residue chain is Small ribosomal subunit protein bS21 (67 aa).

The protein belongs to the bacterial ribosomal protein bS21 family.

This Granulibacter bethesdensis (strain ATCC BAA-1260 / CGDNIH1) protein is Small ribosomal subunit protein bS21.